The sequence spans 310 residues: HPr kinase/phosphorylase (310 aa).

Catalysis depends on residues His138 and Lys159. 153–160 is a binding site for ATP; that stretch reads GASGIGKS. Ser160 contributes to the Mg(2+) binding site. Catalysis depends on Asp177, which acts as the Proton acceptor; for phosphorylation activity. Proton donor; for dephosphorylation activity. Residues 201–210 form an important for the catalytic mechanism of both phosphorylation and dephosphorylation region; sequence IEIRGVGIID. Glu202 serves as a coordination point for Mg(2+). Arg243 is a catalytic residue. The interval 264–269 is important for the catalytic mechanism of dephosphorylation; it reads PVKTGR.

The protein belongs to the HPrK/P family. Homohexamer. Mg(2+) serves as cofactor.

It carries out the reaction [HPr protein]-L-serine + ATP = [HPr protein]-O-phospho-L-serine + ADP + H(+). The enzyme catalyses [HPr protein]-O-phospho-L-serine + phosphate + H(+) = [HPr protein]-L-serine + diphosphate. Its function is as follows. Catalyzes the ATP- as well as the pyrophosphate-dependent phosphorylation of a specific serine residue in HPr, a phosphocarrier protein of the phosphoenolpyruvate-dependent sugar phosphotransferase system (PTS). HprK/P also catalyzes the pyrophosphate-producing, inorganic phosphate-dependent dephosphorylation (phosphorolysis) of seryl-phosphorylated HPr (P-Ser-HPr). The two antagonistic activities of HprK/P are regulated by several intracellular metabolites, which change their concentration in response to the absence or presence of rapidly metabolisable carbon sources (glucose, fructose, etc.) in the growth medium. Therefore, by controlling the phosphorylation state of HPr, HPrK/P is a sensor enzyme that plays a major role in the regulation of carbon metabolism and sugar transport: it mediates carbon catabolite repression (CCR), and regulates PTS-catalyzed carbohydrate uptake and inducer exclusion. This chain is HPr kinase/phosphorylase, found in Lactococcus lactis subsp. cremoris (strain MG1363).